The following is a 231-amino-acid chain: DNA mismatch repair protein MutH (231 aa).

This sequence belongs to the MutH family.

The protein resides in the cytoplasm. Functionally, sequence-specific endonuclease that cleaves unmethylated GATC sequences. It is involved in DNA mismatch repair. The polypeptide is DNA mismatch repair protein MutH (Klebsiella pneumoniae subsp. pneumoniae (strain ATCC 700721 / MGH 78578)).